The following is a 524-amino-acid chain: Bifunctional purine biosynthesis protein PurH (524 aa).

An MGS-like domain is found at 1 to 145 (MIKQALLSVS…KNHRDVTVIV (145 aa)).

Belongs to the PurH family.

It catalyses the reaction (6R)-10-formyltetrahydrofolate + 5-amino-1-(5-phospho-beta-D-ribosyl)imidazole-4-carboxamide = 5-formamido-1-(5-phospho-D-ribosyl)imidazole-4-carboxamide + (6S)-5,6,7,8-tetrahydrofolate. The enzyme catalyses IMP + H2O = 5-formamido-1-(5-phospho-D-ribosyl)imidazole-4-carboxamide. It participates in purine metabolism; IMP biosynthesis via de novo pathway; 5-formamido-1-(5-phospho-D-ribosyl)imidazole-4-carboxamide from 5-amino-1-(5-phospho-D-ribosyl)imidazole-4-carboxamide (10-formyl THF route): step 1/1. The protein operates within purine metabolism; IMP biosynthesis via de novo pathway; IMP from 5-formamido-1-(5-phospho-D-ribosyl)imidazole-4-carboxamide: step 1/1. The sequence is that of Bifunctional purine biosynthesis protein PurH from Cupriavidus necator (strain ATCC 17699 / DSM 428 / KCTC 22496 / NCIMB 10442 / H16 / Stanier 337) (Ralstonia eutropha).